The chain runs to 315 residues: Bifunctional pinoresinol-lariciresinol reductase (315 aa).

NADP(+)-binding positions include 14–20 (GGTGYLG), R39, and K48. Catalysis depends on K142, which acts as the Proton acceptor. R146 lines the NADP(+) pocket. H274 provides a ligand contact to substrate.

This sequence belongs to the NmrA-type oxidoreductase family. Isoflavone reductase subfamily. As to quaternary structure, dimer.

The enzyme catalyses (+)-lariciresinol + NADP(+) = (+)-pinoresinol + NADPH + H(+). It carries out the reaction (-)-secoisolariciresinol + NADP(+) = (+)-lariciresinol + NADPH + H(+). Reductase involved in lignan (-)-hinokinin biosynthesis. Catalyzes the enantioselective conversion of (+)-pinoresinol into (+)-lariciresinol and of (+)-lariciresinol into (-)-secoisolariciresinol. Abstracts the 4R-hydride from the NADPH cofactor during catalysis. Has also a low phenylcoumaran benzylic ether reductase activity. The chain is Bifunctional pinoresinol-lariciresinol reductase (PLR_Lc1) from Linum corymbulosum (Linum).